The following is a 157-amino-acid chain: MFDVLMYLFETYIHNEAEMRVDQDKLTRDLTDAGFEREDIYNALMWLEKLADYQEGLVEPMQLASDPLSLRVYTEEECQRLDASCRGFLLFLEQIQVLNLETREMVIERVLALDTAEFELEDLKWVILMVLFNIPGCENAYQQMEELLFEVNEGMLH.

Belongs to the Smg family.

The polypeptide is Protein Smg (Klebsiella pneumoniae (strain 342)).